The following is a 118-amino-acid chain: Large ribosomal subunit protein bL20 (118 aa).

This sequence belongs to the bacterial ribosomal protein bL20 family.

In terms of biological role, binds directly to 23S ribosomal RNA and is necessary for the in vitro assembly process of the 50S ribosomal subunit. It is not involved in the protein synthesizing functions of that subunit. This chain is Large ribosomal subunit protein bL20, found in Trichodesmium erythraeum (strain IMS101).